Reading from the N-terminus, the 155-residue chain is MPEAGAIRPDGTVLGFDVGSRRIGVAVGSALGAGARAVAVINVHANGPDWVALDRVHKQWRPDGLVVGDPLTLDDKDQPARKRAHAFARQLRERYALPVVLIDERSSSVEAAQRFARERADGRKRRRDAEALDAMAAAVIVERWLAAPDQATLLP.

Belongs to the YqgF nuclease family.

The protein resides in the cytoplasm. Could be a nuclease involved in processing of the 5'-end of pre-16S rRNA. This is Putative pre-16S rRNA nuclease from Xanthomonas axonopodis pv. citri (strain 306).